Reading from the N-terminus, the 419-residue chain is N-acylneuraminate cytidylyltransferase (419 aa).

It belongs to the CMP-NeuNAc synthase family. As to quaternary structure, monomer. May form aggregates. Mg(2+) is required as a cofactor. It depends on Mn(2+) as a cofactor.

It is found in the cytoplasm. The enzyme catalyses an N-acylneuraminate + CTP = a CMP-N-acyl-beta-neuraminate + diphosphate. Inhibited by the CTP analogs 5-mercuri-CTP and CTP-2',3'-dialdehyde. Functionally, catalyzes the formation of CMP-N-acetylneuraminic acid (CMP-NeuNAc), which is essential for the formation of the capsule. This is N-acylneuraminate cytidylyltransferase (neuA) from Escherichia coli O18:K1:H7 (strain RS218 / NMEC).